Reading from the N-terminus, the 69-residue chain is Cytochrome c oxidase subunit 8A, mitochondrial (69 aa).

The transit peptide at methionine 1–lysine 25 directs the protein to the mitochondrion. Residues serine 2–leucine 19 carry the SIFI-degron motif. Over isoleucine 26–glycine 36 the chain is Mitochondrial matrix. Residues isoleucine 37–serine 60 form a helical membrane-spanning segment. At histidine 61–glutamate 69 the chain is on the mitochondrial intermembrane side.

The protein belongs to the cytochrome c oxidase VIII family. Component of the cytochrome c oxidase (complex IV, CIV), a multisubunit enzyme composed of 14 subunits. The complex is composed of a catalytic core of 3 subunits MT-CO1, MT-CO2 and MT-CO3, encoded in the mitochondrial DNA, and 11 supernumerary subunits COX4I1 (or COX4I2), COX5A, COX5B, COX6A1 (or COX6A2), COX6B1 (or COX6B2), COX6C, COX7A2 (or COX7A1), COX7B, COX7C, COX8A and NDUFA4, which are encoded in the nuclear genome. The complex exists as a monomer or a dimer and forms supercomplexes (SCs) in the inner mitochondrial membrane with NADH-ubiquinone oxidoreductase (complex I, CI) and ubiquinol-cytochrome c oxidoreductase (cytochrome b-c1 complex, complex III, CIII), resulting in different assemblies (supercomplex SCI(1)III(2)IV(1) and megacomplex MCI(2)III(2)IV(2)). In terms of processing, in response to mitochondrial stress, the precursor protein is ubiquitinated by the SIFI complex in the cytoplasm before mitochondrial import, leading to its degradation. Within the SIFI complex, UBR4 initiates ubiquitin chain that are further elongated or branched by KCMF1. In terms of tissue distribution, widely expressed.

The protein localises to the mitochondrion inner membrane. It functions in the pathway energy metabolism; oxidative phosphorylation. Its function is as follows. Component of the cytochrome c oxidase, the last enzyme in the mitochondrial electron transport chain which drives oxidative phosphorylation. The respiratory chain contains 3 multisubunit complexes succinate dehydrogenase (complex II, CII), ubiquinol-cytochrome c oxidoreductase (cytochrome b-c1 complex, complex III, CIII) and cytochrome c oxidase (complex IV, CIV), that cooperate to transfer electrons derived from NADH and succinate to molecular oxygen, creating an electrochemical gradient over the inner membrane that drives transmembrane transport and the ATP synthase. Cytochrome c oxidase is the component of the respiratory chain that catalyzes the reduction of oxygen to water. Electrons originating from reduced cytochrome c in the intermembrane space (IMS) are transferred via the dinuclear copper A center (CU(A)) of subunit 2 and heme A of subunit 1 to the active site in subunit 1, a binuclear center (BNC) formed by heme A3 and copper B (CU(B)). The BNC reduces molecular oxygen to 2 water molecules using 4 electrons from cytochrome c in the IMS and 4 protons from the mitochondrial matrix. This chain is Cytochrome c oxidase subunit 8A, mitochondrial (COX8A), found in Homo sapiens (Human).